The chain runs to 408 residues: Snake venom 5'-nucleotidase (408 aa).

Histidine 54 and histidine 77 together coordinate Zn(2+). 2 N-linked (GlcNAc...) asparagine glycosylation sites follow: asparagine 167 and asparagine 181. 2 disulfide bridges follow: cysteine 187/cysteine 192 and cysteine 199/cysteine 221. Residue arginine 188 coordinates AMP. Positions 224, 229, and 252 each coordinate AMP. Cysteines 311 and 314 form a disulfide. AMP is bound by residues phenylalanine 335 and aspartate 341. 2 propeptides (removed in mature form) span residues aspartate 385–leucine 388 and aspartate 385–leucine 408.

This sequence belongs to the 5'-nucleotidase family. Homodimer. Venom 5'-nucleotidases (or a part thereof) may be released into the venom via exosome-like vesicles. They may be attached via a GPI anchor to the membrane of these vesicles. Soluble forms of 5'-nucleotidase might be released by cleavage of the ectodomain in the exosome-like vesicles or venom gland cells. In terms of tissue distribution, expressed by the venom gland.

The protein resides in the membrane. It carries out the reaction a ribonucleoside 5'-phosphate + H2O = a ribonucleoside + phosphate. The catalysed reaction is AMP + H2O = adenosine + phosphate. It catalyses the reaction GMP + H2O = guanosine + phosphate. The enzyme catalyses ADP + H2O = AMP + phosphate + H(+). Its activity is regulated as follows. Is potently inhibited by metal ions Fe(3+), Cu(2+) and Zn(2+). Is enhanced by Mn(2+). Ca(2+) and Mg(2+) have no effect. In terms of biological role, hydrolyzes nucleotides into nucleosides. Prefers AMP as the substrate but also cleaves GMP and ADP. Does not affect AMP, cAMP and cGMP. Inhibits ADP- and collagen-induced platelet aggregation. Snake venom 5'-nucleotidases are widely distributed among venomous snake taxa, but there is a lack of information about their biological activities. They have been shown to inhibit platelet aggregation. This effect may be due to the liberation of inhibitory AMP or adenosine by its action on ADP released upon initiation of aggregation. Venom 5'-nucleotidases are also known to synergistically act in vivo with other toxins like ADPases, phospholipases, and disintegrins to exert a more pronounced anti-coagulant effect. In Macrovipera lebetinus (Levantine viper), this protein is Snake venom 5'-nucleotidase.